We begin with the raw amino-acid sequence, 89 residues long: Ubiquinol-cytochrome-c reductase complex assembly factor 3 (89 aa).

Over 1–7 (MEAARKA) the chain is Mitochondrial matrix. Residues 8 to 28 (LAVVAVLGAGGGVGSILFALV) traverse the membrane as a helical segment. Residues 23-80 (ILFALVTPGELQKQLMLQEMPERDSRRRDEAVRTKELVMATLKDAAATKENVAWRRNW) are mediates lipid-binding. Over 29 to 89 (TPGELQKQLM…WTVRGDGRSA (61 aa)) the chain is Mitochondrial intermembrane.

The protein belongs to the UQCC3 family. As to quaternary structure, associates with the ubiquinol-cytochrome c reductase complex (mitochondrial respiratory chain complex III(CIII) or cytochrome b-c1 complex). Interacts with UQCC1. Forms a complex, named COMC, composed of UQCC1, UQCC2; UQCC3 and UQCC4; mediates MT-CYB hemylation and association with the first nuclear-encoded complex III subunit UQCRQ. Probably cleaved by OMA1 under mitochondrial stress conditions.

The protein resides in the mitochondrion inner membrane. Its function is as follows. Required for the assembly of the ubiquinol-cytochrome c reductase complex (mitochondrial respiratory chain complex III or cytochrome b-c1 complex), mediating cytochrome b recruitment and probably stabilization within the complex. Thereby, plays an important role in ATP production by mitochondria. Cardiolipin-binding protein, it may also control the cardiolipin composition of mitochondria membranes and their morphology. This chain is Ubiquinol-cytochrome-c reductase complex assembly factor 3, found in Rattus norvegicus (Rat).